The following is a 61-amino-acid chain: Metallothionein-2D (61 aa).

Met-1 carries the N-acetylmethionine modification. The segment at 1-29 (MDPNCSCATRDSCACASSCKCKECKCTSC) is beta. A divalent metal cation contacts are provided by Cys-5, Cys-7, Cys-13, Cys-15, Cys-19, Cys-21, Cys-24, Cys-26, Cys-29, Cys-33, Cys-34, Cys-36, Cys-37, Cys-41, Cys-44, Cys-48, Cys-50, Cys-57, Cys-59, and Cys-60. Residues 30-61 (KKSCCSCCPAGCTKCAQGCICKGASDKCSCCA) are alpha.

Belongs to the metallothionein superfamily. Type 1 family. As to quaternary structure, monomer.

Its function is as follows. Metallothioneins have a high content of cysteine residues that bind various heavy metals; these proteins are transcriptionally regulated by both heavy metals and glucocorticoids. This Oryctolagus cuniculus (Rabbit) protein is Metallothionein-2D.